The chain runs to 393 residues: MTNSNRIKLTWISFLSYALTGALVIVTGMVMGNIADYFNLPVSSMSNTFTFLNAGILISIFLNAWLMEIVPLKTQLRFGFLLMVLAVAGLMFSHSLALFSAAMFILGVVSGITMSIGTFLVTQMYEGRQRGSRLLFTDSFFSMAGMIFPMIAAFLLARSIEWYWVYACIGLVYVAIFILTFGCEFPALGKHAPKTDAPVEKEKWGIGVLFLSVAALCYILGQLGFISWVPEYAKGLGMSLNDAGTLVSNFWMSYMVGMWAFSFILRFFDLQRILTVLAGLAAILMYVFNTGTPAHMAWSILALGFFSSAIYTTIITLGSQQTKVPSPKLVNFVLTCGTIGTMLTFVVTGPIVEHSGPQAALLTANGLYAVVFVMCFLLGFVSRHRQHNTLTSH.

The next 12 helical transmembrane spans lie at 11–31, 51–71, 78–98, 101–121, 134–154, 162–182, 206–226, 245–265, 273–293, 297–317, 332–352, and 361–381; these read WISFLSYALTGALVIVTGMVM, FLNAGILISIFLNAWLMEIVP, FGFLLMVLAVAGLMFSHSLAL, AAMFILGVVSGITMSIGTFLV, LLFTDSFFSMAGMIFPMIAAF, WYWVYACIGLVYVAIFILTFG, IGVLFLSVAALCYILGQLGFI, TLVSNFWMSYMVGMWAFSFIL, ILTVLAGLAAILMYVFNTGTP, AWSILALGFFSSAIYTTIITL, FVLTCGTIGTMLTFVVTGPIV, and LLTANGLYAVVFVMCFLLGFV.

It belongs to the major facilitator superfamily. TsgA family.

The protein resides in the cell inner membrane. In Escherichia coli O139:H28 (strain E24377A / ETEC), this protein is Protein TsgA.